Reading from the N-terminus, the 100-residue chain is EKC/KEOPS complex subunit GON7 (100 aa).

Residue methionine 1 is modified to N-acetylmethionine. The disordered stretch occupies residues 50 to 100 (SPVQGEAQDRVAAAPEEALDGDDEDDAEDENNIDNRTNSDGPTAKRPKPPS). Residues 66-81 (EALDGDDEDDAEDENN) show a composition bias toward acidic residues.

As to quaternary structure, component of the EKC/KEOPS complex composed of at least GON7, TP53RK, TPRKB, OSGEP and LAGE3; the whole complex dimerizes.

Its subcellular location is the nucleus. Component of the EKC/KEOPS complex that is required for the formation of a threonylcarbamoyl group on adenosine at position 37 (t(6)A37) in tRNAs that read codons beginning with adenine. The complex is probably involved in the transfer of the threonylcarbamoyl moiety of threonylcarbamoyl-AMP (TC-AMP) to the N6 group of A37. GON7 plays a supporting role to the catalytic subunit OSGEP in the complex. The protein is EKC/KEOPS complex subunit GON7 of Sus scrofa (Pig).